Here is a 430-residue protein sequence, read N- to C-terminus: F-box protein At1g49990 (430 aa).

In terms of domain architecture, F-box spans 1–45 (METGRRRTIPEVEILARLPLRSIARFKSVCKRWKSVIESDYFRRL).

This Arabidopsis thaliana (Mouse-ear cress) protein is F-box protein At1g49990.